A 960-amino-acid polypeptide reads, in one-letter code: Gamma-aminobutyric acid type B receptor subunit 1 (960 aa).

The first 19 residues, 1–19, serve as a signal peptide directing secretion; that stretch reads MLLLLLVPLFLRPLGAGGA. The Extracellular segment spans residues 20–590; the sequence is QTPNVTSEGC…KTFRFLSQKL (571 aa). Asparagine 23 and asparagine 83 each carry an N-linked (GlcNAc...) asparagine glycan. Sushi domains are found at residues 29-95 and 97-158; these read CQII…PSRC and RICS…HCQV. Intrachain disulfides connect cysteine 99-cysteine 144, cysteine 130-cysteine 156, and cysteine 219-cysteine 245. Residues serine 246, serine 269, histidine 286, and tyrosine 366 each coordinate 4-aminobutanoate. A disulfide bond links cysteine 375 and cysteine 409. N-linked (GlcNAc...) asparagine glycans are attached at residues asparagine 408 and asparagine 439. Glutamate 465 serves as a coordination point for 4-aminobutanoate. Asparagine 481, asparagine 501, and asparagine 513 each carry an N-linked (GlcNAc...) asparagine glycan. Residues 591 to 611 form a helical membrane-spanning segment; it reads FISVSVLSSLGIVLAVVCLSF. The Cytoplasmic portion of the chain corresponds to 612–630; it reads NIYNSHVRYIQNSQPNLNN. The chain crosses the membrane as a helical span at residues 631-651; that stretch reads LTAVGCSLALAAVFPLGLDGY. Over 652–666 the chain is Extracellular; the sequence is HIGRSQFPFVCQARL. Residues 667–687 traverse the membrane as a helical segment; sequence WLLGLGFSLGYGSMFTKIWWV. Residues 688 to 709 are Cytoplasmic-facing; the sequence is HTVFTKKEEKKEWRKTLEPWKL. The helical transmembrane segment at 710–730 threads the bilayer; the sequence is YATVGLLVGMDILTLAIWQIV. Over 731–767 the chain is Extracellular; the sequence is DPLHRTIETFAKEEPKEDIDVSILPQLEHCSSKKMNT. The helical transmembrane segment at 768–788 threads the bilayer; the sequence is WLGIFYGYKGLLLLLGIFLAY. At 789–803 the chain is on the cytoplasmic side; it reads ETKSVSTEKINDHRA. A helical membrane pass occupies residues 804-824; it reads VGMAIYNVAVLCLITAPVTMI. The Extracellular segment spans residues 825 to 832; sequence LSSQQDAA. The helical transmembrane segment at 833 to 853 threads the bilayer; that stretch reads FAFASLAIVFSSYITLVVLFV. Topologically, residues 854 to 960 are cytoplasmic; sequence PKMRRLITRG…DGSRVHLLYK (107 aa). Disordered regions lie at residues 866–891 and 908–960; these read QSEA…RLLE and VSEL…LLYK. Residues 867-879 show a composition bias toward polar residues; the sequence is SEAQDTMKTGSST. Residues 868–924 are a coiled coil; that stretch reads EAQDTMKTGSSTNNNEEEKSRLLEKENRELEKIIAEKEERVSELRHQLQSRQQIRSR. At threonine 872 the chain carries Phosphothreonine. The tract at residues 887–915 is interaction with ATF4; the sequence is SRLLEKENRELEKIIAEKEERVSELRHQL. The residue at position 929 (threonine 929) is a Phosphothreonine.

The protein belongs to the G-protein coupled receptor 3 family. GABA-B receptor subfamily. In terms of assembly, heterodimer of GABBR1 and GABBR2. Homodimers may form, but are inactive. Interacts (via C-terminus) with ATF4 (via leucine zipper domain). Interacts with JAKMIP1. Interacts with KCTD8, KCTD12, KCTD12B and KCTD16; this interaction determines the pharmacology and kinetics of the receptor response, the KCTD proteins markedly accelerating the GABA-B response, although to different extents. Expressed in neuronal tissue including cortex, cerebellum and spinal cord. Not detected in non-neuronal tissues including heart, liver, spleen and kidney.

The protein localises to the cell membrane. Its subcellular location is the postsynaptic cell membrane. It is found in the cell projection. The protein resides in the dendrite. Its function is as follows. Component of a heterodimeric G-protein coupled receptor for GABA, formed by GABBR1 and GABBR2. Within the heterodimeric GABA receptor, only GABBR1 seems to bind agonists, while GABBR2 mediates coupling to G proteins. Ligand binding causes a conformation change that triggers signaling via guanine nucleotide-binding proteins (G proteins) and modulates the activity of down-stream effectors, such as adenylate cyclase. Signaling inhibits adenylate cyclase, stimulates phospholipase A2, activates potassium channels, inactivates voltage-dependent calcium-channels and modulates inositol phospholipid hydrolysis. Calcium is required for high affinity binding to GABA. Plays a critical role in the fine-tuning of inhibitory synaptic transmission. Pre-synaptic GABA receptor inhibits neurotransmitter release by down-regulating high-voltage activated calcium channels, whereas postsynaptic GABA receptor decreases neuronal excitability by activating a prominent inwardly rectifying potassium (Kir) conductance that underlies the late inhibitory postsynaptic potentials. Not only implicated in synaptic inhibition but also in hippocampal long-term potentiation, slow wave sleep, muscle relaxation and antinociception. This is Gamma-aminobutyric acid type B receptor subunit 1 (Gabbr1) from Mus musculus (Mouse).